Here is a 7756-residue protein sequence, read N- to C-terminus: Linear gramicidin synthase subunit C (7756 aa).

Carrier domains lie at 977-1052, 2042-2116, 3557-3632, 4621-4695, 6141-6216, and 7200-7274; these read EPRN…AALQ, APAT…ADSS, APRT…ASLL, APAT…TVTD, APRK…AGLL, and APET…GDSV. An O-(pantetheine 4'-phosphoryl)serine mark is found at serine 1012, serine 2077, serine 3592, serine 4656, serine 6176, and serine 7235.

The protein belongs to the ATP-dependent AMP-binding enzyme family. As to quaternary structure, large multienzyme complex composed of 4 subunits; LgrA, LgrB, LgrC and LgrD. The cofactor is pantetheine 4'-phosphate.

In terms of biological role, activates the 7th to 12th amino acids (Val, D-Val, Trp, D-Leu, Xaa and D-Leu) in linear gramicidin and catalyzes the formation of the peptide bond between them. This enzyme is also responsible for the epimerization of the 8th (D-Val), the 10th (D-Leu) and 12th (D-Leu) amino acids. The 11th (Xaa) amino acid is Trp in linear gramicidin A; Phe in linear gramicidin B and Tyr in linear gramicidin C. The chain is Linear gramicidin synthase subunit C (lgrC) from Brevibacillus parabrevis.